Reading from the N-terminus, the 259-residue chain is Leucyl/phenylalanyl-tRNA--protein transferase (259 aa).

It belongs to the L/F-transferase family.

The protein localises to the cytoplasm. It catalyses the reaction N-terminal L-lysyl-[protein] + L-leucyl-tRNA(Leu) = N-terminal L-leucyl-L-lysyl-[protein] + tRNA(Leu) + H(+). The catalysed reaction is N-terminal L-arginyl-[protein] + L-leucyl-tRNA(Leu) = N-terminal L-leucyl-L-arginyl-[protein] + tRNA(Leu) + H(+). It carries out the reaction L-phenylalanyl-tRNA(Phe) + an N-terminal L-alpha-aminoacyl-[protein] = an N-terminal L-phenylalanyl-L-alpha-aminoacyl-[protein] + tRNA(Phe). Functions in the N-end rule pathway of protein degradation where it conjugates Leu, Phe and, less efficiently, Met from aminoacyl-tRNAs to the N-termini of proteins containing an N-terminal arginine or lysine. The polypeptide is Leucyl/phenylalanyl-tRNA--protein transferase (Teredinibacter turnerae (strain ATCC 39867 / T7901)).